We begin with the raw amino-acid sequence, 396 residues long: Pectinesterase (396 aa).

The first 21 residues, 1-21, serve as a signal peptide directing secretion; the sequence is MQSKTLYLKATALLGGCTVFA. Thr-174 contacts substrate. The active-site Proton donor is the Asp-232. Residue Asp-259 is the Nucleophile of the active site. Residues Arg-324 and Trp-326 each contribute to the substrate site.

This sequence belongs to the pectinesterase family.

It localises to the secreted. It catalyses the reaction [(1-&gt;4)-alpha-D-galacturonosyl methyl ester](n) + n H2O = [(1-&gt;4)-alpha-D-galacturonosyl](n) + n methanol + n H(+). The protein operates within glycan metabolism; pectin degradation; 2-dehydro-3-deoxy-D-gluconate from pectin: step 1/5. Its function is as follows. Involved in maceration and soft-rotting of plant tissue. In Ralstonia nicotianae (strain ATCC BAA-1114 / GMI1000) (Ralstonia solanacearum), this protein is Pectinesterase (pme).